Consider the following 466-residue polypeptide: CBL-interacting protein kinase 20 (466 aa).

A Protein kinase domain is found at 12–276 (YELGRSLGHG…IDELVKHPWF (265 aa)). ATP-binding positions include 18–26 (LGHGTFSKV) and Lys41. Asp139 functions as the Proton acceptor in the catalytic mechanism. Residues 162 to 191 (DFGLSALSASRRHDGLLHTTCGTPSYVAPE) form an activation loop region. One can recognise an NAF domain in the interval 297–329 (KPANAAMNMKPASLNAFDIISLSQGFDLSGMFC). Residues 337 to 366 (TQDQLFVTGKPATAIVSRLEEIAETEHFTV) are PPI. The tract at residues 446 to 466 (ASEKNQLPAVSEVSPLSSPRN) is disordered.

This sequence belongs to the protein kinase superfamily. CAMK Ser/Thr protein kinase family. SNF1 subfamily. Mn(2+) serves as cofactor.

The enzyme catalyses L-seryl-[protein] + ATP = O-phospho-L-seryl-[protein] + ADP + H(+). It catalyses the reaction L-threonyl-[protein] + ATP = O-phospho-L-threonyl-[protein] + ADP + H(+). In terms of biological role, CIPK serine-threonine protein kinases interact with CBL proteins. Binding of a CBL protein to the regulatory NAF domain of CIPK protein lead to the activation of the kinase in a calcium-dependent manner. The sequence is that of CBL-interacting protein kinase 20 (CIPK20) from Oryza sativa subsp. japonica (Rice).